Reading from the N-terminus, the 149-residue chain is Large ribosomal subunit protein bL9 (149 aa).

This sequence belongs to the bacterial ribosomal protein bL9 family.

Its function is as follows. Binds to the 23S rRNA. In Thiobacillus denitrificans (strain ATCC 25259 / T1), this protein is Large ribosomal subunit protein bL9.